Here is a 540-residue protein sequence, read N- to C-terminus: ATP-dependent RNA helicase DBP3 (540 aa).

The span at Met-1–Asp-35 shows a compositional bias: basic and acidic residues. The segment at Met-1–Lys-89 is disordered. Residues Lys-36–Lys-52 show a composition bias toward basic residues. Basic and acidic residues-rich tracts occupy residues Glu-53–Asp-62 and Asp-68–Glu-79. The Q motif motif lies at Leu-130–Ala-156. One can recognise a Helicase ATP-binding domain in the interval Trp-159–Val-332. Ala-172–Thr-179 is a binding site for ATP. The DEAD box signature appears at Asp-279 to Asp-282. Positions Lys-361 to Gly-510 constitute a Helicase C-terminal domain.

It belongs to the DEAD box helicase family. DDX5/DBP2 subfamily.

Its subcellular location is the nucleus. The protein localises to the nucleolus. The enzyme catalyses ATP + H2O = ADP + phosphate + H(+). Its function is as follows. ATP-dependent RNA helicase required for 60S ribosomal subunit synthesis. Involved in efficient pre-rRNA processing, predominantly at site A3, which is necessary for the normal formation of 25S and 5.8S rRNAs. The chain is ATP-dependent RNA helicase DBP3 (DBP3) from Candida glabrata (strain ATCC 2001 / BCRC 20586 / JCM 3761 / NBRC 0622 / NRRL Y-65 / CBS 138) (Yeast).